The chain runs to 130 residues: Small ribosomal subunit protein uS9 (130 aa).

This sequence belongs to the universal ribosomal protein uS9 family.

The sequence is that of Small ribosomal subunit protein uS9 from Anoxybacillus flavithermus (strain DSM 21510 / WK1).